Reading from the N-terminus, the 351-residue chain is UDP-3-O-acylglucosamine N-acyltransferase 1 (351 aa).

His237 acts as the Proton acceptor in catalysis.

Belongs to the transferase hexapeptide repeat family. LpxD subfamily. In terms of assembly, homotrimer.

It carries out the reaction a UDP-3-O-[(3R)-3-hydroxyacyl]-alpha-D-glucosamine + a (3R)-hydroxyacyl-[ACP] = a UDP-2-N,3-O-bis[(3R)-3-hydroxyacyl]-alpha-D-glucosamine + holo-[ACP] + H(+). It participates in bacterial outer membrane biogenesis; LPS lipid A biosynthesis. In terms of biological role, catalyzes the N-acylation of UDP-3-O-acylglucosamine using 3-hydroxyacyl-ACP as the acyl donor. Is involved in the biosynthesis of lipid A, a phosphorylated glycolipid that anchors the lipopolysaccharide to the outer membrane of the cell. The protein is UDP-3-O-acylglucosamine N-acyltransferase 1 of Legionella pneumophila (strain Paris).